The sequence spans 59 residues: UPF0434 protein lpl1884 (59 aa).

Belongs to the UPF0434 family.

In Legionella pneumophila (strain Lens), this protein is UPF0434 protein lpl1884.